The primary structure comprises 740 residues: Ethylene receptor 1 (740 aa).

The next 3 membrane-spanning stretches (helical) occupy residues 23–43 (ISDF…IYFV), 53–73 (WVLV…LINL), and 95–115 (AAVS…LLSV). Residues Cys65 and His69 each coordinate Cu cation. Residues 158 to 307 (DRHTILKTTL…VVADQVAVAL (150 aa)) form the GAF domain. One can recognise a Histidine kinase domain in the interval 350 to 587 (VMNHEMRTPM…TVTFVVKLGI (238 aa)). His353 carries the post-translational modification Phosphohistidine; by autocatalysis. In terms of domain architecture, Response regulatory spans 615 to 732 (KVLLMDENGI…KMRNVLSKLL (118 aa)). Asp663 bears the 4-aspartylphosphate mark.

It belongs to the ethylene receptor family. As to quaternary structure, homodimer; disulfide-linked. Cu cation is required as a cofactor. Post-translationally, activation probably requires a transfer of a phosphate group between a His in the transmitter domain and an Asp of the receiver domain.

The protein resides in the endoplasmic reticulum membrane. The catalysed reaction is ATP + protein L-histidine = ADP + protein N-phospho-L-histidine.. May act early in the ethylene signal transduction pathway, possibly as an ethylene receptor, or as a regulator of the pathway. The protein is Ethylene receptor 1 (ETR1) of Pelargonium hortorum (Common geranium).